The chain runs to 443 residues: Histidinol dehydrogenase (443 aa).

NAD(+) contacts are provided by Y133, Q191, and N214. Positions 240, 262, and 265 each coordinate substrate. Zn(2+)-binding residues include Q262 and H265. Residues E329 and H330 each act as proton acceptor in the active site. 4 residues coordinate substrate: H330, D363, E417, and H422. D363 serves as a coordination point for Zn(2+). H422 serves as a coordination point for Zn(2+).

It belongs to the histidinol dehydrogenase family. As to quaternary structure, homodimer. Requires Zn(2+) as cofactor.

It carries out the reaction L-histidinol + 2 NAD(+) + H2O = L-histidine + 2 NADH + 3 H(+). The protein operates within amino-acid biosynthesis; L-histidine biosynthesis; L-histidine from 5-phospho-alpha-D-ribose 1-diphosphate: step 9/9. In terms of biological role, catalyzes the sequential NAD-dependent oxidations of L-histidinol to L-histidinaldehyde and then to L-histidine. This is Histidinol dehydrogenase from Blochmanniella pennsylvanica (strain BPEN).